The following is a 219-amino-acid chain: Ribosomal RNA small subunit methyltransferase I (219 aa).

Belongs to the methyltransferase superfamily. RsmI family.

It localises to the cytoplasm. It carries out the reaction cytidine(1402) in 16S rRNA + S-adenosyl-L-methionine = 2'-O-methylcytidine(1402) in 16S rRNA + S-adenosyl-L-homocysteine + H(+). Catalyzes the 2'-O-methylation of the ribose of cytidine 1402 (C1402) in 16S rRNA. In Coprothermobacter proteolyticus (strain ATCC 35245 / DSM 5265 / OCM 4 / BT), this protein is Ribosomal RNA small subunit methyltransferase I.